The chain runs to 154 residues: Putative pre-16S rRNA nuclease (154 aa).

This sequence belongs to the YqgF nuclease family.

It localises to the cytoplasm. Functionally, could be a nuclease involved in processing of the 5'-end of pre-16S rRNA. This chain is Putative pre-16S rRNA nuclease, found in Rickettsia rickettsii (strain Iowa).